Here is a 598-residue protein sequence, read N- to C-terminus: F-box/WD repeat-containing protein 8 (598 aa).

Position 1 is an N-acetylmethionine (Met1). The segment at 17–93 (LAQAQAPKKR…RSPLAREGAG (77 aa)) is disordered. Over residues 29–40 (PEAAERRARRPE) the composition is skewed to basic and acidic residues. Residues 61 to 71 (EGAGRPPAARA) show a composition bias toward low complexity. Phosphoserine is present on residues Ser83 and Ser85. An F-box domain is found at 113 to 159 (PFFDIQLPYELAINIFQYLDRKELGRCAQVSKTWKVIAEDEVLWYRL). WD repeat units lie at residues 201–250 (AVSE…LESE), 259–299 (QPNV…FEHD), 300–340 (ARIQ…AEFE), 341–383 (VPKL…LLYA), 384–429 (HGPP…LKLG), 430–475 (NVLR…SAHQ), 476–513 (LRVS…EVYS), and 514–561 (GHPV…AYEF).

As to quaternary structure, component of the Cul7-RING(FBXW8) complex consisting of CUL7, RBX1, SKP1 and FBXW8; within the complex interacts with CUL7 and SKP1. Interacts with GLMN isoform 1. Interacts with OBSL1, CUL1, CUL2, CCT6B, PFDN5, CCT2, CCT3, CCT6A, CCT7, VBP1, CCDC8, ARF1, TRIP13, PDCD5 and GORASP1. Interacts with MAP4K1/HPK1 (when autophosphorylated). Associated component of the 3M complex. Interacts with POUF51 (when phosphorylated on 'Ser-355'). Post-translationally, phosphorylation at Ser-85 by mTORC2 promotes FBXW8 stabilization, allowing its translocation to the cytosol in response to insulin.

It localises to the cytoplasm. The protein localises to the perinuclear region. It is found in the golgi apparatus. It participates in protein modification; protein ubiquitination. Substrate-recognition component of the Cul7-RING(FBXW8) ubiquitin ligase complex, which mediates the ubiquitination and subsequent proteasomal degradation of target proteins. The Cul7-RING(FBXW8) complex mediates ubiquitination and consequent degradation of GORASP1, acting as a component of the ubiquitin ligase pathway that regulates Golgi morphogenesis and dendrite patterning in brain. Mediates ubiquitination and degradation of IRS1 in a mTOR-dependent manner: the Cul7-RING(FBXW8) complex recognizes and binds IRS1 previously phosphorylated by S6 kinase (RPS6KB1 or RPS6KB2). The Cul7-RING(FBXW8) complex also mediates ubiquitination of MAP4K1/HPK1: recognizes and binds autophosphorylated MAP4K1/HPK1, leading to its degradation, thereby affecting cell proliferation and differentiation. The Cul7-RING(FBXW8) complex also mediates ubiquitination of phosphorylated cyclin-D1 (CCND1). The Cul7-RING(FBXW8) complex is however not a major regulator of CCND1 stability during the G1/S transition. Associated component of the 3M complex, suggesting that it mediates some of 3M complex functions. The protein is F-box/WD repeat-containing protein 8 of Homo sapiens (Human).